The primary structure comprises 117 residues: Small ribosomal subunit protein bS6 (117 aa).

The disordered stretch occupies residues 96 to 117 (HAEGPSVQMQKRDERDNRRERR). Residues 105-117 (QKRDERDNRRERR) show a composition bias toward basic and acidic residues.

The protein belongs to the bacterial ribosomal protein bS6 family.

Binds together with bS18 to 16S ribosomal RNA. This Ruegeria sp. (strain TM1040) (Silicibacter sp.) protein is Small ribosomal subunit protein bS6.